The following is a 198-amino-acid chain: Dephospho-CoA kinase (198 aa).

One can recognise a DPCK domain in the interval 3 to 198 (VVGLTGGIGA…HRRYSLLAAA (196 aa)). Residue 11 to 16 (GAGKST) coordinates ATP.

It belongs to the CoaE family.

The protein localises to the cytoplasm. The catalysed reaction is 3'-dephospho-CoA + ATP = ADP + CoA + H(+). The protein operates within cofactor biosynthesis; coenzyme A biosynthesis; CoA from (R)-pantothenate: step 5/5. Its function is as follows. Catalyzes the phosphorylation of the 3'-hydroxyl group of dephosphocoenzyme A to form coenzyme A. This Methylococcus capsulatus (strain ATCC 33009 / NCIMB 11132 / Bath) protein is Dephospho-CoA kinase.